A 169-amino-acid polypeptide reads, in one-letter code: Phosphopantetheine adenylyltransferase (169 aa).

Substrate is bound at residue threonine 14. Residues 14 to 15 (TF) and histidine 22 each bind ATP. Substrate-binding residues include lysine 46, leucine 78, and arginine 92. ATP-binding positions include 93 to 95 (GLR), glutamate 103, and 128 to 134 (HSFISSS).

The protein belongs to the bacterial CoaD family. As to quaternary structure, homohexamer. The cofactor is Mg(2+).

It is found in the cytoplasm. The catalysed reaction is (R)-4'-phosphopantetheine + ATP + H(+) = 3'-dephospho-CoA + diphosphate. The protein operates within cofactor biosynthesis; coenzyme A biosynthesis; CoA from (R)-pantothenate: step 4/5. Its function is as follows. Reversibly transfers an adenylyl group from ATP to 4'-phosphopantetheine, yielding dephospho-CoA (dPCoA) and pyrophosphate. The protein is Phosphopantetheine adenylyltransferase of Stenotrophomonas maltophilia (strain R551-3).